Consider the following 306-residue polypeptide: Glutaminase (306 aa).

Ser-61, Asn-111, Glu-157, Asn-164, Tyr-188, Tyr-240, and Val-258 together coordinate substrate.

It belongs to the glutaminase family. In terms of assembly, homotetramer.

It catalyses the reaction L-glutamine + H2O = L-glutamate + NH4(+). The polypeptide is Glutaminase (Psychrobacter cryohalolentis (strain ATCC BAA-1226 / DSM 17306 / VKM B-2378 / K5)).